The following is a 350-amino-acid chain: Ribosomal RNA large subunit methyltransferase M (350 aa).

Residues serine 184, 217–220 (APGG), aspartate 236, aspartate 256, and aspartate 272 contribute to the S-adenosyl-L-methionine site. Lysine 301 acts as the Proton acceptor in catalysis.

This sequence belongs to the class I-like SAM-binding methyltransferase superfamily. RNA methyltransferase RlmE family. RlmM subfamily. As to quaternary structure, monomer.

The protein localises to the cytoplasm. The enzyme catalyses cytidine(2498) in 23S rRNA + S-adenosyl-L-methionine = 2'-O-methylcytidine(2498) in 23S rRNA + S-adenosyl-L-homocysteine + H(+). In terms of biological role, catalyzes the 2'-O-methylation at nucleotide C2498 in 23S rRNA. This chain is Ribosomal RNA large subunit methyltransferase M, found in Marinomonas sp. (strain MWYL1).